The primary structure comprises 105 residues: Large ribosomal subunit protein uL24 (105 aa).

This sequence belongs to the universal ribosomal protein uL24 family. In terms of assembly, part of the 50S ribosomal subunit.

In terms of biological role, one of two assembly initiator proteins, it binds directly to the 5'-end of the 23S rRNA, where it nucleates assembly of the 50S subunit. Functionally, one of the proteins that surrounds the polypeptide exit tunnel on the outside of the subunit. The polypeptide is Large ribosomal subunit protein uL24 (Psychrobacter cryohalolentis (strain ATCC BAA-1226 / DSM 17306 / VKM B-2378 / K5)).